The sequence spans 141 residues: Hemoglobin subunit alpha (141 aa).

In terms of domain architecture, Globin spans 1 to 141 (VLSSADKNNV…VSTVLTSKYR (141 aa)). A Phosphoserine modification is found at serine 3. N6-succinyllysine is present on residues lysine 7 and lysine 11. Lysine 16 is modified (N6-acetyllysine; alternate). Lysine 16 is subject to N6-succinyllysine; alternate. Tyrosine 24 carries the post-translational modification Phosphotyrosine. Serine 35 carries the post-translational modification Phosphoserine. Lysine 40 carries the N6-succinyllysine modification. Serine 49 is subject to Phosphoserine. O2 is bound at residue histidine 58. Histidine 87 lines the heme b pocket. Serine 102 carries the phosphoserine modification. Threonine 108 bears the Phosphothreonine mark. Phosphoserine is present on serine 124. Threonine 134 and threonine 137 each carry phosphothreonine. Phosphoserine is present on serine 138.

This sequence belongs to the globin family. In terms of assembly, heterotetramer of two alpha chains and two beta chains. Red blood cells.

Involved in oxygen transport from the lung to the various peripheral tissues. Its function is as follows. Hemopressin acts as an antagonist peptide of the cannabinoid receptor CNR1. Hemopressin-binding efficiently blocks cannabinoid receptor CNR1 and subsequent signaling. The protein is Hemoglobin subunit alpha (HBA) of Panthera pardus saxicolor (Northern Persian leopard).